Here is a 445-residue protein sequence, read N- to C-terminus: Phosphoglucosamine mutase (445 aa).

Serine 102 functions as the Phosphoserine intermediate in the catalytic mechanism. Serine 102, aspartate 241, aspartate 243, and aspartate 245 together coordinate Mg(2+). Serine 102 is modified (phosphoserine).

This sequence belongs to the phosphohexose mutase family. Mg(2+) serves as cofactor. Activated by phosphorylation.

It catalyses the reaction alpha-D-glucosamine 1-phosphate = D-glucosamine 6-phosphate. Its function is as follows. Catalyzes the conversion of glucosamine-6-phosphate to glucosamine-1-phosphate. In Escherichia coli O127:H6 (strain E2348/69 / EPEC), this protein is Phosphoglucosamine mutase.